The sequence spans 247 residues: uncharacterized protein (247 aa).

The region spanning 11-85 is the HTH merR-type domain; sequence GMSIGAVLDL…LKVIRAQLDA (75 aa). The H-T-H motif DNA-binding region spans 14–38; that stretch reads IGAVLDLLRPDFPDVTISKIRFLEA.

Homodimer.

Its function is as follows. Transcriptional regulator that binds to its own promoter and thus may play a role in the regulation of the cotranscribed genes Rv1827 and Rv1828. Can also bind several promoter regions of genes that are essential, including ftsZ. Binds to the imperfect everted repeat sequence CTCAA through its winged-HTH motif. This is an uncharacterized protein from Mycobacterium tuberculosis (strain ATCC 25618 / H37Rv).